A 306-amino-acid polypeptide reads, in one-letter code: Bifunctional protein FolD 1 (306 aa).

NADP(+) contacts are provided by residues glycine 168–serine 170, serine 193, and isoleucine 234.

The protein belongs to the tetrahydrofolate dehydrogenase/cyclohydrolase family. As to quaternary structure, homodimer.

The enzyme catalyses (6R)-5,10-methylene-5,6,7,8-tetrahydrofolate + NADP(+) = (6R)-5,10-methenyltetrahydrofolate + NADPH. It catalyses the reaction (6R)-5,10-methenyltetrahydrofolate + H2O = (6R)-10-formyltetrahydrofolate + H(+). Its pathway is one-carbon metabolism; tetrahydrofolate interconversion. In terms of biological role, catalyzes the oxidation of 5,10-methylenetetrahydrofolate to 5,10-methenyltetrahydrofolate and then the hydrolysis of 5,10-methenyltetrahydrofolate to 10-formyltetrahydrofolate. The polypeptide is Bifunctional protein FolD 1 (Rhizobium meliloti (strain 1021) (Ensifer meliloti)).